A 131-amino-acid polypeptide reads, in one-letter code: Small ribosomal subunit protein uS9 (131 aa).

It belongs to the universal ribosomal protein uS9 family.

The protein is Small ribosomal subunit protein uS9 of Haemophilus ducreyi (strain 35000HP / ATCC 700724).